Consider the following 182-residue polypeptide: CDP-diacylglycerol--glycerol-3-phosphate 3-phosphatidyltransferase (182 aa).

Over Met1 to Phe12 the chain is Cytoplasmic. Residues Arg13–Leu37 traverse the membrane as a helical segment. Topologically, residues Ile38–Thr60 are periplasmic. The chain crosses the membrane as a helical span at residues Arg61–Leu81. The Cytoplasmic segment spans residues Val82–Phe86. Residues His87 to Ala107 traverse the membrane as a helical segment. Over Leu108–Pro145 the chain is Periplasmic. A helical transmembrane segment spans residues Asp146–Met168. The Cytoplasmic portion of the chain corresponds to Phe169 to Glu181.

This sequence belongs to the CDP-alcohol phosphatidyltransferase class-I family.

The protein resides in the cell inner membrane. The enzyme catalyses a CDP-1,2-diacyl-sn-glycerol + sn-glycerol 3-phosphate = a 1,2-diacyl-sn-glycero-3-phospho-(1'-sn-glycero-3'-phosphate) + CMP + H(+). It participates in phospholipid metabolism; phosphatidylglycerol biosynthesis; phosphatidylglycerol from CDP-diacylglycerol: step 1/2. Catalyzes the conversion of cytidine diphosphate diacylglycerol (CDP-DG) and glycerol 3-phosphate into phosphatidylglycerol. Essential for the synthesis of anionic phospholipids, thereby playing a role in balancing the ratio of zwitterionic and anionic phospholipids, which is thought to be important for normal membrane function. This is CDP-diacylglycerol--glycerol-3-phosphate 3-phosphatidyltransferase from Sodalis glossinidius (strain morsitans).